Reading from the N-terminus, the 334-residue chain is Protein-methionine-sulfoxide reductase catalytic subunit MsrP (334 aa).

Residues M1–A44 constitute a signal peptide (tat-type signal). Mo-molybdopterin is bound by residues N88, Y91–E92, C146, T181, N233, R238, and G249–K251.

Belongs to the MsrP family. Heterodimer of a catalytic subunit (MsrP) and a heme-binding subunit (MsrQ). Requires Mo-molybdopterin as cofactor. Post-translationally, predicted to be exported by the Tat system. The position of the signal peptide cleavage has not been experimentally proven.

Its subcellular location is the periplasm. It carries out the reaction L-methionyl-[protein] + a quinone + H2O = L-methionyl-(S)-S-oxide-[protein] + a quinol. It catalyses the reaction L-methionyl-[protein] + a quinone + H2O = L-methionyl-(R)-S-oxide-[protein] + a quinol. In terms of biological role, part of the MsrPQ system that repairs oxidized periplasmic proteins containing methionine sulfoxide residues (Met-O), using respiratory chain electrons. Thus protects these proteins from oxidative-stress damage caused by reactive species of oxygen and chlorine generated by the host defense mechanisms. MsrPQ is essential for the maintenance of envelope integrity under bleach stress, rescuing a wide series of structurally unrelated periplasmic proteins from methionine oxidation, including the primary periplasmic chaperone SurA and the lipoprotein Pal. The catalytic subunit MsrP is non-stereospecific, being able to reduce both (R-) and (S-) diastereoisomers of methionine sulfoxide. The protein is Protein-methionine-sulfoxide reductase catalytic subunit MsrP of Shigella dysenteriae serotype 1 (strain Sd197).